A 318-amino-acid chain; its full sequence is Small ribosomal subunit protein mS26 (318 aa).

The segment at 295–318 (IDSKLNPTSNGAGNNGNNNNTTNL) is disordered. Residues 300 to 318 (NPTSNGAGNNGNNNNTTNL) show a composition bias toward low complexity.

Belongs to the mitochondrion-specific ribosomal protein mS26 family. In terms of assembly, component of the mitochondrial small ribosomal subunit (mt-SSU). Mature yeast 74S mitochondrial ribosomes consist of a small (37S) and a large (54S) subunit. The 37S small subunit contains a 15S ribosomal RNA (15S mt-rRNA) and 34 different proteins. The 54S large subunit contains a 21S rRNA (21S mt-rRNA) and 46 different proteins.

Its subcellular location is the mitochondrion. Functionally, component of the mitochondrial ribosome (mitoribosome), a dedicated translation machinery responsible for the synthesis of mitochondrial genome-encoded proteins, including at least some of the essential transmembrane subunits of the mitochondrial respiratory chain. The mitoribosomes are attached to the mitochondrial inner membrane and translation products are cotranslationally integrated into the membrane. The chain is Small ribosomal subunit protein mS26 (PET123) from Saccharomyces cerevisiae (strain ATCC 204508 / S288c) (Baker's yeast).